A 252-amino-acid chain; its full sequence is Octanoyltransferase (252 aa).

The segment covering 1 to 21 has biased composition (low complexity); sequence MPSAPAAPAAPAAPDAAASVA. The interval 1–22 is disordered; that stretch reads MPSAPAAPAAPAAPDAAASVAP. The 182-residue stretch at 56 to 237 folds into the BPL/LPL catalytic domain; it reads PDTDDEIWVV…RLIAHLDGAT (182 aa). Substrate is bound by residues 96-103, 168-170, and 181-183; these read RGGQITYH, ALG, and GLS. The active-site Acyl-thioester intermediate is the Cys-199.

The protein belongs to the LipB family.

The protein resides in the cytoplasm. It carries out the reaction octanoyl-[ACP] + L-lysyl-[protein] = N(6)-octanoyl-L-lysyl-[protein] + holo-[ACP] + H(+). Its pathway is protein modification; protein lipoylation via endogenous pathway; protein N(6)-(lipoyl)lysine from octanoyl-[acyl-carrier-protein]: step 1/2. Functionally, catalyzes the transfer of endogenously produced octanoic acid from octanoyl-acyl-carrier-protein onto the lipoyl domains of lipoate-dependent enzymes. Lipoyl-ACP can also act as a substrate although octanoyl-ACP is likely to be the physiological substrate. The chain is Octanoyltransferase from Burkholderia pseudomallei (strain 668).